The sequence spans 241 residues: MGLRSFVIPAVDIKDGKAVRLYKGDPEAVTVYGDDPVSVAKQWEEKGAKHLHIVDLDGAFEGKPKNIDIVKDIVKTVSIPVEFGGGLRSFEAVKSIVETGVERVVIGSLAYQNRQEFERIVSAYPGKVIVGIDAKDGKVAIKGWLEKTEYTPLDFARMFDDLDIWGFLYTDVNRDGAMVGPNIEGTKYLAQNLKHPVIASGGVGSVEDLKKLYDLKKYGVYGVVVGKALYEGKIKLEQLED.

The active-site Proton acceptor is the Asp-12. Asp-133 acts as the Proton donor in catalysis.

It belongs to the HisA/HisF family.

Its subcellular location is the cytoplasm. The enzyme catalyses 1-(5-phospho-beta-D-ribosyl)-5-[(5-phospho-beta-D-ribosylamino)methylideneamino]imidazole-4-carboxamide = 5-[(5-phospho-1-deoxy-D-ribulos-1-ylimino)methylamino]-1-(5-phospho-beta-D-ribosyl)imidazole-4-carboxamide. It functions in the pathway amino-acid biosynthesis; L-histidine biosynthesis; L-histidine from 5-phospho-alpha-D-ribose 1-diphosphate: step 4/9. This Persephonella marina (strain DSM 14350 / EX-H1) protein is 1-(5-phosphoribosyl)-5-[(5-phosphoribosylamino)methylideneamino] imidazole-4-carboxamide isomerase.